Here is a 411-residue protein sequence, read N- to C-terminus: Putative ion-transport protein YfeO (411 aa).

Transmembrane regions (helical) follow at residues 9–29, 54–74, 99–119, 149–169, 186–206, 223–243, 258–278, 296–316, 322–342, 343–363, and 386–406; these read MLLL…VLIA, DSPF…GLII, ALPG…SLGP, ILAS…AALI, LFAP…FFHP, IASG…AVWC, VLIL…GGPL, LGAG…VIAA, GGRI…LHAH, VEAV…VLVV, and LLCI…LLAA.

It belongs to the chloride channel (TC 2.A.49) family.

The protein localises to the cell membrane. This chain is Putative ion-transport protein YfeO, found in Salmonella choleraesuis (strain SC-B67).